The chain runs to 244 residues: Mediator of RNA polymerase II transcription subunit 19 (244 aa).

2 disordered regions span residues 1-67 and 171-244; these read MENF…PFYL and PKKK…SSLR. Positions 26-38 are enriched in pro residues; sequence GKPPPPPPPPPGG. A compositionally biased stretch (low complexity) spans 44–55; sequence PPSTATSAPAGA. Positions 171–182 are enriched in basic residues; it reads PKKKNKHKHKQS. A Phosphoserine modification is found at serine 194. Positions 212-224 are enriched in basic residues; it reads KRKKKEKKKKKNR. Serine 226 is modified (phosphoserine). Residues 234–244 are compositionally biased toward low complexity; the sequence is SSQASSSSSLR.

This sequence belongs to the Mediator complex subunit 19 family. Component of the Mediator complex, which is composed of MED1, MED4, MED6, MED7, MED8, MED9, MED10, MED11, MED12, MED13, MED13L, MED14, MED15, MED16, MED17, MED18, MED19, MED20, MED21, MED22, MED23, MED24, MED25, MED26, MED27, MED29, MED30, MED31, CCNC, CDK8 and CDC2L6/CDK11. The MED12, MED13, CCNC and CDK8 subunits form a distinct module termed the CDK8 module. Mediator containing the CDK8 module is less active than Mediator lacking this module in supporting transcriptional activation. Individual preparations of the Mediator complex lacking one or more distinct subunits have been variously termed ARC, CRSP, DRIP, PC2, SMCC and TRAP.

The protein resides in the nucleus. Component of the Mediator complex, a coactivator involved in the regulated transcription of nearly all RNA polymerase II-dependent genes. Mediator functions as a bridge to convey information from gene-specific regulatory proteins to the basal RNA polymerase II transcription machinery. Mediator is recruited to promoters by direct interactions with regulatory proteins and serves as a scaffold for the assembly of a functional preinitiation complex with RNA polymerase II and the general transcription factors. The chain is Mediator of RNA polymerase II transcription subunit 19 (Med19) from Mus musculus (Mouse).